The chain runs to 571 residues: Glutamate--tRNA ligase (571 aa).

Residues 75–88 are compositionally biased toward basic and acidic residues; it reads GGPREDVARDKEGL. Residues 75-98 form a disordered region; it reads GGPREDVARDKEGLKPLPGAEPGN. A 'HIGH' region motif is present at residues 105 to 115; sequence PNPSGPLHIGH.

Belongs to the class-I aminoacyl-tRNA synthetase family. Glutamate--tRNA ligase type 2 subfamily.

Its subcellular location is the cytoplasm. The catalysed reaction is tRNA(Glu) + L-glutamate + ATP = L-glutamyl-tRNA(Glu) + AMP + diphosphate. Catalyzes the attachment of glutamate to tRNA(Glu) in a two-step reaction: glutamate is first activated by ATP to form Glu-AMP and then transferred to the acceptor end of tRNA(Glu). The chain is Glutamate--tRNA ligase from Methanopyrus kandleri (strain AV19 / DSM 6324 / JCM 9639 / NBRC 100938).